The chain runs to 940 residues: Isoleucine--tRNA ligase (940 aa).

Positions 58–68 (PYANGSIHIGH) match the 'HIGH' region motif. L-isoleucyl-5'-AMP is bound at residue E564. The 'KMSKS' region motif lies at 605–609 (KMSKS). Residue K608 participates in ATP binding. Residues C903, C906, C923, and C926 each coordinate Zn(2+).

It belongs to the class-I aminoacyl-tRNA synthetase family. IleS type 1 subfamily. As to quaternary structure, monomer. Zn(2+) serves as cofactor.

The protein localises to the cytoplasm. The catalysed reaction is tRNA(Ile) + L-isoleucine + ATP = L-isoleucyl-tRNA(Ile) + AMP + diphosphate. Its function is as follows. Catalyzes the attachment of isoleucine to tRNA(Ile). As IleRS can inadvertently accommodate and process structurally similar amino acids such as valine, to avoid such errors it has two additional distinct tRNA(Ile)-dependent editing activities. One activity is designated as 'pretransfer' editing and involves the hydrolysis of activated Val-AMP. The other activity is designated 'posttransfer' editing and involves deacylation of mischarged Val-tRNA(Ile). In Shewanella baltica (strain OS223), this protein is Isoleucine--tRNA ligase.